The sequence spans 5875 residues: Probable E3 ubiquitin-protein ligase DDB_G0283893 (5875 aa).

15 disordered regions span residues 17 to 64, 164 to 185, 232 to 276, 302 to 342, 642 to 693, 716 to 740, 1081 to 1101, 1291 to 1367, 1806 to 1851, 1952 to 1982, 2008 to 2036, 2109 to 2203, 2893 to 2930, 3083 to 3119, and 3195 to 3214; these read DNNN…QPPE, NNNNNNDNNSNNKTDDNNQSNN, DSNN…TTTS, PSFK…CGNG, TTTT…SPPI, SIRSSSNKVNEGTPKSSTTTTTTNA, ITPTNTTTTTTTTTPSTTSIP, DGWE…KEST, QESE…SSPP, KKPSSDQQHHSGGCHHSNHHHHHHHSRKDEV, EDEDELQYLSEDEKVVNGNENTGEEDDEE, KALK…TGSG, DSDDSDDEFPTVDENVTSSGLSTSAGGSGGGVAGTNDS, TSPSSSKGKSSSASASSSSSTTTATSTLPSNTQSGSN, and LLPPPSSSSNENVVDNDNTN. Residues 18-52 are compositionally biased toward low complexity; it reads NNNNNNNNNNNNNNNNNNNNNNNNNNNSNNNNNKN. Positions 237–249 are enriched in basic and acidic residues; sequence DNKENKKEDKESS. Low complexity-rich tracts occupy residues 250–276, 317–333, and 642–656; these read KPIASSPIPITTTNIEKPTIATTTTTS, TSTITTQPLPSSTITQP, and TTTTTATTTTTTTTT. A compositionally biased stretch (polar residues) spans 657-669; sequence NESIPMETTRSST. A compositionally biased stretch (low complexity) spans 670 to 693; sequence PIPIVNNNNNNNDSKSNSKKSPPI. Positions 716 to 725 are enriched in polar residues; it reads SIRSSSNKVN. Positions 728-740 are enriched in low complexity; the sequence is TPKSSTTTTTTNA. Residues 1297–1330 are compositionally biased toward acidic residues; the sequence is FNDDDDEEEDEEEEEEMDEDDSENDEDEDSEESE. The stretch at 1300–1328 forms a coiled coil; it reads DDDEEEDEEEEEEMDEDDSENDEDEDSEE. 2 stretches are compositionally biased toward low complexity: residues 1347 to 1363 and 1838 to 1851; these read TTTTTAAAATTTATATT and SNSSPALTASSSPP. A compositionally biased stretch (basic residues) spans 1963–1977; it reads GGCHHSNHHHHHHHS. A UBR-type zinc finger spans residues 2042–2113; sequence KVCTYTFTKN…KGNPCKALKP (72 aa). 2 stretches are compositionally biased toward low complexity: residues 2118 to 2168 and 2178 to 2203; these read PPKQ…TNTN and SSSSSNSSPSFNNNNNNNNNGTTGSG. The segment covering 2893-2903 has biased composition (acidic residues); that stretch reads DSDDSDDEFPT. The segment covering 2908–2917 has biased composition (low complexity); it reads VTSSGLSTSA. Positions 3201-3211 are enriched in low complexity; that stretch reads SSSNENVVDND. Residues 3226-3280 form a ZZ-type zinc finger; it reads EVLFSCDLCNINPITGKRWNCSNCGDFDLCNQCYQNPEKDHPKDHIFKEFIIDEP. Residues Cys-3231, Cys-3234, Cys-3246, Cys-3249, Cys-3255, Cys-3258, His-3266, and His-3270 each contribute to the Zn(2+) site. Disordered regions lie at residues 3282 to 3312, 3326 to 3359, and 3754 to 3776; these read KDGDEKESTNEPPQQQKQQDQQLQQDLQDDS, LNNNNNNNNNNESMDTSTLTTTTTTTNKTTPTTN, and SSTSQDTQQESSNNNNNNNSNDI. Composition is skewed to low complexity over residues 3295-3307 and 3327-3358; these read QQQKQQDQQLQQD and NNNNNNNNNNESMDTSTLTTTTTTTNKTTPTT. Positions 3313 to 3332 constitute a UIM domain; that stretch reads EYDEELKIAISMSLNNNNNN. A compositionally biased stretch (polar residues) spans 3754-3763; the sequence is SSTSQDTQQE. A compositionally biased stretch (low complexity) spans 3764–3774; it reads SSNNNNNNNSN. The stretch at 4118-4146 forms a coiled coil; the sequence is IENQEDHKRAIQTIEKESENAHKKYQRLI. Low complexity predominate over residues 4182-4222; it reads NTSTNSTGSNNQSINSSSGNISTNSSSSSSSSFGISNQSSS. 3 disordered regions span residues 4182–4237, 4295–4323, and 4616–4671; these read NTST…GGVI, FISGGGQPSSNDKQQQQQQQQQQSSRQCP, and KILS…FDND. Residues 4223–4236 are compositionally biased toward gly residues; that stretch reads GNGGGGVGSGGGGV. Over residues 4308–4317 the composition is skewed to low complexity; that stretch reads QQQQQQQQQQ. Residues 4585 to 4618 adopt a coiled-coil conformation; that stretch reads QIQQQIALQQQQIQQQIQQQQQQLNESVSGLKIL. 2 stretches are compositionally biased toward low complexity: residues 4619-4635 and 4645-4659; these read SPSSSSSSPSGVGATGS and SSGSSVSGSGSISSS. Positions 5357–5870 are UBR4 E3 catalytic module; it reads PALPFVLVLL…EYLLKLYKSV (514 aa). The segment at 5476–5620 adopts a HemiRING-type zinc-finger fold; sequence GFTCMVCREG…WVNLNNISRV (145 aa). Residues Cys-5479, Cys-5482, His-5554, and Cys-5557 each coordinate Zn(2+). The region spanning 5623-5870 is the UZI domain; the sequence is PKFRILSHDL…EYLLKLYKSV (248 aa). Positions 5819–5846 form a coiled coil; sequence QVDVKELLNCFENELKEFQDEMEFFDDE.

It belongs to the UBR4 family.

It participates in protein modification; protein ubiquitination. Probable E3 ubiquitin-protein ligase. This chain is Probable E3 ubiquitin-protein ligase DDB_G0283893, found in Dictyostelium discoideum (Social amoeba).